We begin with the raw amino-acid sequence, 554 residues long: Exodeoxyribonuclease 7 large subunit (554 aa).

The protein belongs to the XseA family. As to quaternary structure, heterooligomer composed of large and small subunits.

It is found in the cytoplasm. It catalyses the reaction Exonucleolytic cleavage in either 5'- to 3'- or 3'- to 5'-direction to yield nucleoside 5'-phosphates.. In terms of biological role, bidirectionally degrades single-stranded DNA into large acid-insoluble oligonucleotides, which are then degraded further into small acid-soluble oligonucleotides. This Chlamydia pneumoniae (Chlamydophila pneumoniae) protein is Exodeoxyribonuclease 7 large subunit.